The primary structure comprises 198 residues: uncharacterized protein (198 aa).

It is found in the plastid. It localises to the chloroplast. This is an uncharacterized protein from Antithamnion sp. (Red alga).